We begin with the raw amino-acid sequence, 491 residues long: Protein SET DOMAIN GROUP 40 (491 aa).

Residues 36-278 (HSLSVSDFPD…LGEQVLLCYG (243 aa)) form the SET domain.

Belongs to the class V-like SAM-binding methyltransferase superfamily.

This Arabidopsis thaliana (Mouse-ear cress) protein is Protein SET DOMAIN GROUP 40 (SDG40).